A 278-amino-acid polypeptide reads, in one-letter code: Probable endonuclease LCL3 (278 aa).

A helical transmembrane segment spans residues 15 to 37 (FSSDVVLLSLLISGSTLGAIAGY). The TNase-like domain occupies 58-263 (RWMYGKVTAV…KAKKRGLWRQ (206 aa)). Arginine 154 is an active-site residue. Aspartate 159 is a Ca(2+) binding site. Active-site residues include glutamate 162 and arginine 202.

Belongs to the LCL3 family.

The protein localises to the mitochondrion. It localises to the membrane. This is Probable endonuclease LCL3 (LCL3) from Vanderwaltozyma polyspora (strain ATCC 22028 / DSM 70294 / BCRC 21397 / CBS 2163 / NBRC 10782 / NRRL Y-8283 / UCD 57-17) (Kluyveromyces polysporus).